Reading from the N-terminus, the 291-residue chain is Protease HtpX homolog (291 aa).

Helical transmembrane passes span 4 to 24 (VFLF…SARL) and 38 to 58 (LGML…ISLL). Residue His-144 participates in Zn(2+) binding. Residue Glu-145 is part of the active site. His-148 is a Zn(2+) binding site. The next 2 membrane-spanning stretches (helical) occupy residues 159-179 (LIQG…AYAL) and 199-219 (ISSI…VMYF). Glu-224 provides a ligand contact to Zn(2+).

The protein belongs to the peptidase M48B family. Requires Zn(2+) as cofactor.

The protein resides in the cell inner membrane. The sequence is that of Protease HtpX homolog from Chlorobium luteolum (strain DSM 273 / BCRC 81028 / 2530) (Pelodictyon luteolum).